The sequence spans 321 residues: Oxidoreductase P35 (321 aa).

Belongs to the Gfo/Idh/MocA family.

It is found in the cell surface. Functionally, oxidoreductase that may be involved in ulvan degradation. Ulvan is the main polysaccharide component of the Ulvales (green seaweed) cell wall. It is composed of disaccharide building blocks comprising 3-sulfated rhamnose (Rha3S) linked to D-glucuronic acid (GlcA), L-iduronic acid (IduA), or D-xylose (Xyl). The polypeptide is Oxidoreductase P35 (Formosa agariphila (strain DSM 15362 / KCTC 12365 / LMG 23005 / KMM 3901 / M-2Alg 35-1)).